The following is a 726-amino-acid chain: Catalase-peroxidase (726 aa).

A cross-link (tryptophyl-tyrosyl-methioninium (Trp-Tyr) (with M-239)) is located at residues 90 to 213; the sequence is WHAAGTYRIG…LAAVQMGLIY (124 aa). Catalysis depends on H91, which acts as the Proton acceptor. A cross-link (tryptophyl-tyrosyl-methioninium (Tyr-Met) (with W-90)) is located at residues 213–239; it reads YVNPEGPNGKPDPAAAARDIRETFARM. Residue H254 coordinates heme b. The interval 338–359 is disordered; that stretch reads TPKGGAGAGTVPDAHDPSKRHA.

Belongs to the peroxidase family. Peroxidase/catalase subfamily. In terms of assembly, homodimer or homotetramer. The cofactor is heme b. Post-translationally, formation of the three residue Trp-Tyr-Met cross-link is important for the catalase, but not the peroxidase activity of the enzyme.

It carries out the reaction H2O2 + AH2 = A + 2 H2O. It catalyses the reaction 2 H2O2 = O2 + 2 H2O. Bifunctional enzyme with both catalase and broad-spectrum peroxidase activity. This chain is Catalase-peroxidase, found in Bradyrhizobium sp. (strain ORS 278).